Consider the following 514-residue polypeptide: Cardiolipin synthase 2 (514 aa).

Transmembrane regions (helical) follow at residues 7 to 27 (LIFF…FIDV), 41 to 61 (ILGI…CVIF), and 71 to 91 (LTWL…YLLF). 2 PLD phosphodiesterase domains span residues 249–276 (INYR…GDEY) and 427–454 (EKGF…DMRS). Active-site residues include His254, Lys256, Asp261, His432, Lys434, and Asp439.

The protein belongs to the phospholipase D family. Cardiolipin synthase subfamily.

It localises to the cell membrane. The catalysed reaction is 2 a 1,2-diacyl-sn-glycero-3-phospho-(1'-sn-glycerol) = a cardiolipin + glycerol. Functionally, catalyzes the reversible phosphatidyl group transfer from one phosphatidylglycerol molecule to another to form cardiolipin (CL) (diphosphatidylglycerol) and glycerol. This is Cardiolipin synthase 2 (cls2) from Bacillus anthracis.